Consider the following 872-residue polypeptide: Leucine--tRNA ligase (872 aa).

A 'HIGH' region motif is present at residues 42-52 (PYPSGSLHMGH). The 'KMSKS' region signature appears at 634–638 (TMSKS). Lys637 serves as a coordination point for ATP.

This sequence belongs to the class-I aminoacyl-tRNA synthetase family.

The protein localises to the cytoplasm. It carries out the reaction tRNA(Leu) + L-leucine + ATP = L-leucyl-tRNA(Leu) + AMP + diphosphate. The sequence is that of Leucine--tRNA ligase from Nostoc sp. (strain PCC 7120 / SAG 25.82 / UTEX 2576).